We begin with the raw amino-acid sequence, 250 residues long: Transcriptional activator protein ExpR (250 aa).

In terms of domain architecture, HTH luxR-type spans 173–238 (KSQEADLFSQ…HAIRLGVEMN (66 aa)). Residues 197–216 (YQEIALILGITTSTVKFHIG) constitute a DNA-binding region (H-T-H motif).

It belongs to the autoinducer-regulated transcriptional regulatory protein family.

Functionally, functions as an OHLL responsive transcriptional regulator that acts in virulence (soft rot disease) through the activation of genes for plant tissue macerating enzymes. The polypeptide is Transcriptional activator protein ExpR (expR) (Dickeya dadantii (strain 3937) (Erwinia chrysanthemi (strain 3937))).